A 125-amino-acid polypeptide reads, in one-letter code: Protein Bouncer (125 aa).

Positions 1-18 (MGCVLLFLLLVCVPVVLP) are cleaved as a signal peptide. 5 cysteine pairs are disulfide-bonded: C23–C48, C26–C35, C42–C66, C72–C91, and C92–C97. The region spanning 23–98 (CLFCPVTSLN…FSCCGGHYCN (76 aa)) is the UPAR/Ly6 domain. N32 carries an N-linked (GlcNAc...) asparagine glycan. N-linked (GlcNAc...) asparagine glycosylation occurs at N84. A lipid anchor (GPI-anchor amidated asparagine) is attached at N98. A propeptide spans 99 to 125 (SQPRAEPGGRLLLLLLPAAALTAAGAL) (removed in mature form).

This sequence belongs to the SPACA4/bouncer family. In terms of assembly, interacts with spermatocyte complex composed of izumo1, spaca6 and tmem81. In terms of processing, N-glycosylated. As to expression, highly expressed in oocytes. Not expressed in testis.

The protein resides in the cell membrane. Oocyte-expressed fertilization factor that mediates sperm-egg binding and is essential for sperm entry into the egg. Necessary and sufficient to mediate species-specific gamete recognition and fertilization, which is essential for vertebrate species performing external fertilization. External fertilization cannot guarantee that only conspecific sperm reaches the egg by precopulatory mate choice: proteins such as Bouncer can therefore support the selection of conspecific sperm. The protein is Protein Bouncer of Danio rerio (Zebrafish).